The following is a 78-amino-acid chain: Acyl carrier protein AcpP (78 aa).

One can recognise a Carrier domain in the interval 2–77 (SDIAERVKKI…DAVKFIEKAQ (76 aa)). Residue serine 37 is modified to O-(pantetheine 4'-phosphoryl)serine.

It belongs to the acyl carrier protein (ACP) family. 4'-phosphopantetheine is transferred from CoA to a specific serine of apo-ACP by AcpS. This modification is essential for activity because fatty acids are bound in thioester linkage to the sulfhydryl of the prosthetic group.

It is found in the cytoplasm. Its pathway is lipid metabolism; fatty acid biosynthesis. Functionally, carrier of the growing fatty acid chain in fatty acid biosynthesis. The protein is Acyl carrier protein AcpP of Agrobacterium fabrum (strain C58 / ATCC 33970) (Agrobacterium tumefaciens (strain C58)).